We begin with the raw amino-acid sequence, 521 residues long: Envelope glycoprotein (521 aa).

Positions 1–20 (MVDSTIRLVATIFLISLTQQ) are cleaved as a signal peptide. N-linked (GlcNAc...) asparagine; by host glycosylation is found at N44, N158, N189, and N396. Residues 501–517 (ISWVVVIGVVLVGVCLM) form a helical membrane-spanning segment.

As to quaternary structure, homooligomer; disulfide-linked (possibly homodimer).

The protein localises to the virion membrane. In terms of biological role, attaches the virus to host cellular receptor and later induces fusion of virion with host membrane. This Dhori virus (strain Indian/1313/61) (Dho) protein is Envelope glycoprotein (P4).